A 315-amino-acid chain; its full sequence is Ribosomal protein L11 methyltransferase (315 aa).

Residues T161, G182, D204, and N248 each contribute to the S-adenosyl-L-methionine site.

This sequence belongs to the methyltransferase superfamily. PrmA family.

The protein resides in the cytoplasm. The catalysed reaction is L-lysyl-[protein] + 3 S-adenosyl-L-methionine = N(6),N(6),N(6)-trimethyl-L-lysyl-[protein] + 3 S-adenosyl-L-homocysteine + 3 H(+). Its function is as follows. Methylates ribosomal protein L11. The chain is Ribosomal protein L11 methyltransferase from Shouchella clausii (strain KSM-K16) (Alkalihalobacillus clausii).